Here is a 910-residue protein sequence, read N- to C-terminus: MSTKVKKCREPARVTLPAPEEEEDGEAEGGESQRRRRGWRGVNGGLEPPCPRAPPSPGPDASSEGSPSRWRTAGMRDKGRRQAVRGPAFMFGARGPSLTAEEERFLDAAEYGNIPVVRKMLEESRTLNVNCVDYMGQNALQLAVGNEHLEVTELLLKKENLARIGDALLLAISKGYVRIVEAILGHPGFAASRRLTLSPCEQELRDDDFYAYDEDGTRFSPDITPIILAAHCHKYEVVHLLLLKGARIERPHDYFCRCSDCAEKQRLDAFSHSRSRINAYKGLASPAYLSLSSEDPVLTALELSNELAKLANIEKEFKNDYRKLSMQCKDFVVGVLDLCRDSEEVEAILNGDLESAEPLERHGHKASLSRVKLAIKYEVKKFVAHPNCQQQLLTIWYENLSGLREQTIAIKCLVVLVVALGLPFLAIGYWIAPCSRLGKILRSPFMKFVAHAASFIIFLGLLVFNASDRFEGITTLPNITVIDYPKQIFRVKTTQFTWTEMLIMVWVLGMMWSECKELWLEGPREYIVQLWNVLDFGMLSIFIAAFTARFLAFLQATKAQQYVDSHVQESDLSEVTLPPEVQYFTYARDKWLPSDPQIISEGLYAIAVVLSFSRIAYILPANESFGPLQISLGRTVKDIFKFMVLFIMVFLAFMIGMFILYSYYLGAKVNPAFTTVEESFKTLFWSIFGLSEVTSVVLKYDHKFIENIGYVLYGIYNVTMVVVLLNMLIAMINSSYQEIEDDSDVEWKFARSKLWLSYFDDGKTLPPPFSLVPSPKSFVYFIMRITNFSKCRRRRLQKDLELGMGNSKSRLNLFTQSNSRVFESHSFNSILNQPTRYQQIMKRLIKRYVLKAQVDKENDEVNEGELKEIKQDISSLRYELLEDKSQATEELAILIHKLSEKLNPSVLRCE.

Positions 1-93 (MSTKVKKCRE…VRGPAFMFGA (93 aa)) are disordered. Residues 1-448 (MSTKVKKCRE…KILRSPFMKF (448 aa)) lie on the Cytoplasmic side of the membrane. Acidic residues predominate over residues 19-29 (PEEEEDGEAEG). Pro residues predominate over residues 48 to 58 (PPCPRAPPSPG). Residues 59–68 (PDASSEGSPS) are compositionally biased toward low complexity. ANK repeat units follow at residues 100-129 (AEEE…TLNV), 135-164 (MGQN…LARI), 166-192 (DALL…FAAS), and 221-250 (PDIT…RIER). Glu-147 serves as a coordination point for Ca(2+). A helical membrane pass occupies residues 449–466 (VAHAASFIIFLGLLVFNA). Residues 467 to 497 (SDRFEGITTLPNITVIDYPKQIFRVKTTQFT) lie on the Extracellular side of the membrane. N-linked (GlcNAc...) asparagine glycosylation is present at Asn-478. A helical transmembrane segment spans residues 498–516 (WTEMLIMVWVLGMMWSECK). Positions 514, 517, and 532 each coordinate Ca(2+). The Cytoplasmic segment spans residues 517 to 529 (ELWLEGPREYIVQ). Residues 530–551 (LWNVLDFGMLSIFIAAFTARFL) traverse the membrane as a helical segment. Residues 552–595 (AFLQATKAQQYVDSHVQESDLSEVTLPPEVQYFTYARDKWLPSD) are Extracellular-facing. The helical transmembrane segment at 596 to 619 (PQIISEGLYAIAVVLSFSRIAYIL) threads the bilayer. The Cytoplasmic portion of the chain corresponds to 620-638 (PANESFGPLQISLGRTVKD). Residues 623 to 652 (ESFGPLQISLGRTVKDIFKFMVLFIMVFLA) form an ANK 5 repeat. Residues 639-662 (IFKFMVLFIMVFLAFMIGMFILYS) traverse the membrane as a helical segment. Residues 663–702 (YYLGAKVNPAFTTVEESFKTLFWSIFGLSEVTSVVLKYDH) lie on the Extracellular side of the membrane. A helical transmembrane segment spans residues 703–728 (KFIENIGYVLYGIYNVTMVVVLLNML). At 729–910 (IAMINSSYQE…KLNPSVLRCE (182 aa)) the chain is on the cytoplasmic side. The Ca(2+) site is built by Glu-860, Glu-863, Glu-865, and Asp-872.

Belongs to the transient receptor (TC 1.A.4) family. STrpC subfamily. TRPC3 sub-subfamily. As to quaternary structure, homotetramer. Interacts with ITPR1, ITPR3, MX1 and RNF24. Interacts with JPH2; the interaction is involved in maintaining Ca(2+) homeostasis in skeletal muscle and is mediated by JPH2 'Ser-165' phosphorylation. As to expression, abundantly expressed in brain. Concentrated in cerebellar Purkinje cells and sparsely localized in cerebellar granule lyer, pontine nuclei and thalamus. Lower levels detected in other tissues.

Its subcellular location is the cell membrane. It carries out the reaction Ca(2+)(in) = Ca(2+)(out). Its activity is regulated as follows. Activated by diacylglycerol (DAG) in a membrane-delimited fashion, independently of protein kinase C. Activated by inositol 1,4,5-triphosphate receptors (ITPR) with bound IP3. May be activated by internal calcium store depletion. Inhibited by intracellular Ca(2+). In terms of biological role, forms a receptor-activated non-selective calcium permeant cation channel. May be operated by a phosphatidylinositol second messenger system activated by receptor tyrosine kinases or G-protein coupled receptors. This is Short transient receptor potential channel 3 (Trpc3) from Mus musculus (Mouse).